We begin with the raw amino-acid sequence, 997 residues long: Autophagy-related protein 9 (997 aa).

At 1–318 the chain is on the cytoplasmic side; sequence MERDEYQLPN…DVYNYYLGNG (318 aa). Position 19 is a phosphoserine; by ATG1 (Ser-19). Residues 29-39 are compositionally biased toward polar residues; the sequence is VNPSLNSQEMS. Residues 29–88 form a disordered region; that stretch reads VNPSLNSQEMSNFPLPDIERGSSLLHSTNDSREDVDENDLRVPESDQGTSTEEEDEVDEE. The span at 79–88 shows a compositional bias: acidic residues; it reads TEEEDEVDEE. Residues Lys-113 and Lys-121 each participate in a glycyl lysine isopeptide (Lys-Gly) (interchain with G-Cter in ubiquitin) cross-link. Ser-122 is subject to Phosphoserine. Disordered regions lie at residues 128-159 and 213-235; these read VEGSTDDSVPKVGQLSSEEEEDNEFINNDGFD and IHHDKDKSANNGPRNINGNQKHG. Residue Lys-138 forms a Glycyl lysine isopeptide (Lys-Gly) (interchain with G-Cter in ubiquitin) linkage. Phosphoserine occurs at positions 143 and 144. The span at 144-159 shows a compositional bias: acidic residues; that stretch reads SEEEEDNEFINNDGFD. The segment covering 221-233 has biased composition (polar residues); it reads ANNGPRNINGNQK. Residues 319–339 form a helical membrane-spanning segment; sequence FYCIILEKILNICTLLFVVFV. The Lumenal portion of the chain corresponds to 340–376; it reads STYMGHCVDYSKLPTSHRVSDIIIDKCYSNSITGFTK. Residues 377 to 397 form a helical membrane-spanning segment; sequence FFLWMFYFFVILKIVQLYFDV. Residues 398–538 lie on the Cytoplasmic side of the membrane; the sequence is QKLSELQNFY…EELQKRFMLA (141 aa). Residues 539-559 lie within the membrane without spanning it; that stretch reads GFLNIILAPFLVTYFVLLYFF. The Cytoplasmic segment spans residues 560-620; the sequence is RYFNEYKTSP…DQFPKEKTNL (61 aa). Residues 621-641 form a helical membrane-spanning segment; sequence FLKFVSFICGSFVAILAFLTV. Topologically, residues 642–656 are lumenal; the sequence is FDPENFLNFEITSDR. The residue at position 657 (Ser-657) is a Phosphoserine; by ATG1. A helical membrane pass occupies residues 657–677; that stretch reads SVIFYITILGAIWSVSRNTIT. Residues 678–723 are Cytoplasmic-facing; that stretch reads QEYHVFDPEETLKELYEYTHYLPKEWEGRYHKEEIKLEFCKLYNLR. A Glycyl lysine isopeptide (Lys-Gly) (interchain with G-Cter in ubiquitin) cross-link involves residue Lys-701. Residues 724 to 744 lie within the membrane without spanning it; the sequence is IVILLRELTSLMITPFVLWFS. Residues 745 to 997 lie on the Cytoplasmic side of the membrane; the sequence is LPSSAGRIVD…EYYKKSDVGR (253 aa). Ser-787 and Ser-792 each carry phosphoserine. Thr-794 is subject to Phosphothreonine. Ser-802 carries the phosphoserine; by ATG1 modification. Thr-804 bears the Phosphothreonine; by ATG1 mark. A phosphoserine; by ATG1 mark is found at Ser-831 and Ser-842. Phosphoserine is present on Ser-864. Ser-948 and Ser-969 each carry phosphoserine; by ATG1.

This sequence belongs to the ATG9 family. In terms of assembly, homotrimer; forms a homotrimer with a central pore that forms a path between the two membrane leaflets. Interacts with ATG23 and ATG27 to form a cycling complex for trafficking to the PAS. Interacts (via N-terminus) with ATG11, required for recruitment of ATG9 to the PAS for the Cvt pathway during nutrient-rich conditions. Interacts (via N-terminus) with ATG17; required for recruitment to the PAS during autophagy and starved conditions. Interacts with ATG2 and ATG18; required for the retrieval of ATG9 from the PAS to the cytoplasmic pool. Interacts with ATG41. Interacts with the conserved oligomeric Golgi (COG) complex subunits COG3 and COG4. Interacts with TRS85. Post-translationally, phosphorylated by ATG1; phosphorylation is required for autophagy and cytoplasm to vacuole transport (Cvt) vesicle formation. Phosphorylation by ATG1 regulates ATG18 interaction and preautophagosome elongation. Phosphorylation at Ser-122 is required for selective autophagy by regulating anterograde trafficking and interaction with ATG23 and ATG27. Phosphorylation at Ser-122 prevents ubiquitination by the SCF(MET30) complex. In terms of processing, ubiquitinated by the SCF(MET30) complex in normal conditions, leading to its degradation by the proteasome, thereby preventing inappropriate induction of autophagy. Ubiquitination by the SCF(MET30) complex is prevented by phosphorylation at Ser-122.

It localises to the preautophagosomal structure membrane. The protein localises to the cytoplasmic vesicle membrane. The protein resides in the golgi apparatus membrane. It is found in the endoplasmic reticulum membrane. Its subcellular location is the mitochondrion membrane. The enzyme catalyses a 1,2-diacyl-sn-glycero-3-phosphocholine(in) = a 1,2-diacyl-sn-glycero-3-phosphocholine(out). The catalysed reaction is a 1,2-diacyl-sn-glycero-3-phospho-L-serine(in) = a 1,2-diacyl-sn-glycero-3-phospho-L-serine(out). It carries out the reaction a 1,2-diacyl-sn-glycero-3-phosphoethanolamine(in) = a 1,2-diacyl-sn-glycero-3-phosphoethanolamine(out). It catalyses the reaction a 1,2-diacyl-sn-glycero-3-phospho-(1D-myo-inositol-3-phosphate)(in) = a 1,2-diacyl-sn-glycero-3-phospho-(1D-myo-inositol-3-phosphate)(out). Phospholipid scramblase involved in autophagy and cytoplasm to vacuole transport (Cvt) vesicle formation. Cycles between the preautophagosomal structure/phagophore assembly site (PAS) and the cytoplasmic vesicle pool and supplies membrane for the growing autophagosome. Lipid scramblase activity plays a key role in preautophagosomal structure/phagophore assembly by distributing the phospholipids that arrive through ATG2 from the cytoplasmic to the luminal leaflet of the bilayer, thereby driving autophagosomal membrane expansion. Required for mitophagy. Also involved in endoplasmic reticulum-specific autophagic process and is essential for the survival of cells subjected to severe ER stress. Recruits vesicle-tethering proteins TRS85 and YPT1 to the autophagosome formation site. Also recruits ATG23 and ATG8 to the PAS. In Saccharomyces cerevisiae (strain ATCC 204508 / S288c) (Baker's yeast), this protein is Autophagy-related protein 9.